We begin with the raw amino-acid sequence, 300 residues long: 1D-myo-inositol 2-acetamido-2-deoxy-alpha-D-glucopyranoside deacetylase (300 aa).

Zn(2+) contacts are provided by H13, D16, and H147.

This sequence belongs to the MshB deacetylase family. It depends on Zn(2+) as a cofactor.

It carries out the reaction 1D-myo-inositol 2-acetamido-2-deoxy-alpha-D-glucopyranoside + H2O = 1D-myo-inositol 2-amino-2-deoxy-alpha-D-glucopyranoside + acetate. In terms of biological role, catalyzes the deacetylation of 1D-myo-inositol 2-acetamido-2-deoxy-alpha-D-glucopyranoside (GlcNAc-Ins) in the mycothiol biosynthesis pathway. The polypeptide is 1D-myo-inositol 2-acetamido-2-deoxy-alpha-D-glucopyranoside deacetylase (Mycobacterium avium (strain 104)).